Reading from the N-terminus, the 432-residue chain is Trigger factor (432 aa).

The region spanning 161 to 246 (EDRVTIDFTG…LKKVEERELP (86 aa)) is the PPIase FKBP-type domain.

It belongs to the FKBP-type PPIase family. Tig subfamily. As to quaternary structure, homodimer and monomer. In vivo most of the ribosomes are in complex with monomeric TF. Uncomplexed TF, however, is in a monomer-dimer equilibrium with approximately two thirds of TF existing in a dimeric state.

It is found in the cytoplasm. The enzyme catalyses [protein]-peptidylproline (omega=180) = [protein]-peptidylproline (omega=0). Involved in protein export. Acts as a chaperone by maintaining the newly synthesized protein in an open conformation. Functions as a peptidyl-prolyl cis-trans isomerase. This is Trigger factor from Shigella dysenteriae serotype 1 (strain Sd197).